We begin with the raw amino-acid sequence, 1212 residues long: DNA-directed RNA polymerase subunit beta'' (1212 aa).

4 residues coordinate Zn(2+): C229, C302, C309, and C312. The interval 1162–1212 (QKETSKNKKETSKNKKETSKNKKETSKNKKETSKNKKETSKNKKEASKNKK) is disordered.

The protein belongs to the RNA polymerase beta' chain family. RpoC2 subfamily. As to quaternary structure, in plastids the minimal PEP RNA polymerase catalytic core is composed of four subunits: alpha, beta, beta', and beta''. When a (nuclear-encoded) sigma factor is associated with the core the holoenzyme is formed, which can initiate transcription. It depends on Zn(2+) as a cofactor.

The protein localises to the plastid. Its subcellular location is the chloroplast. The catalysed reaction is RNA(n) + a ribonucleoside 5'-triphosphate = RNA(n+1) + diphosphate. DNA-dependent RNA polymerase catalyzes the transcription of DNA into RNA using the four ribonucleoside triphosphates as substrates. The protein is DNA-directed RNA polymerase subunit beta'' of Cryptomeria japonica (Japanese cedar).